The sequence spans 231 residues: Large ribosomal subunit protein uL1 (231 aa).

It belongs to the universal ribosomal protein uL1 family. Part of the 50S ribosomal subunit.

In terms of biological role, binds directly to 23S rRNA. The L1 stalk is quite mobile in the ribosome, and is involved in E site tRNA release. Its function is as follows. Protein L1 is also a translational repressor protein, it controls the translation of the L11 operon by binding to its mRNA. The sequence is that of Large ribosomal subunit protein uL1 from Francisella tularensis subsp. tularensis (strain FSC 198).